Here is a 312-residue protein sequence, read N- to C-terminus: DNA primase small subunit PriS (312 aa).

Catalysis depends on residues D88, D90, and D215.

It belongs to the eukaryotic-type primase small subunit family. In terms of assembly, heterodimer of a small subunit (PriS) and a large subunit (PriL). Requires Mg(2+) as cofactor. It depends on Mn(2+) as a cofactor.

Catalytic subunit of DNA primase, an RNA polymerase that catalyzes the synthesis of short RNA molecules used as primers for DNA polymerase during DNA replication. The small subunit contains the primase catalytic core and has DNA synthesis activity on its own. Binding to the large subunit stabilizes and modulates the activity, increasing the rate of DNA synthesis while decreasing the length of the DNA fragments, and conferring RNA synthesis capability. The DNA polymerase activity may enable DNA primase to also catalyze primer extension after primer synthesis. May also play a role in DNA repair. The sequence is that of DNA primase small subunit PriS from Pyrobaculum arsenaticum (strain DSM 13514 / JCM 11321 / PZ6).